The following is a 203-amino-acid chain: Thymidylate kinase (203 aa).

10 to 17 (GIDGAGKS) serves as a coordination point for ATP.

This sequence belongs to the thymidylate kinase family.

It carries out the reaction dTMP + ATP = dTDP + ADP. Phosphorylation of dTMP to form dTDP in both de novo and salvage pathways of dTTP synthesis. The protein is Thymidylate kinase of Cupriavidus taiwanensis (strain DSM 17343 / BCRC 17206 / CCUG 44338 / CIP 107171 / LMG 19424 / R1) (Ralstonia taiwanensis (strain LMG 19424)).